Consider the following 475-residue polypeptide: Vitronectin (475 aa).

Residues 1 to 19 form the signal peptide; it reads MAPLRPIFTLALLLWVVLA. One can recognise an SMB domain in the interval 20–63; the sequence is DQESCKDRCTEGFNANRKCQCDELCSYYQSCCADYAAECKPQVT. 7 cysteine pairs are disulfide-bonded: Cys24/Cys28, Cys24/Cys40, Cys28/Cys58, Cys38/Cys40, Cys38/Cys51, Cys44/Cys50, and Cys51/Cys58. The Cell attachment site signature appears at 64–66; the sequence is RGD. Thr69 bears the Phosphothreonine mark. Tyr75, Tyr78, and Tyr80 each carry sulfotyrosine. Asn87 carries an N-linked (GlcNAc...) asparagine glycan. The disordered stretch occupies residues 87–123; it reads NASVHAQPESPTVGQEPTLSPDLQTEGGAEPTHEVPL. Residues 95-109 are compositionally biased toward polar residues; that stretch reads ESPTVGQEPTLSPDL. Hemopexin repeat units lie at residues 158 to 202, 203 to 250, and 251 to 305; these read GKPF…VWGI, EGPI…FSGI, and PDNV…FEHF. Asn169 and Asn242 each carry an N-linked (GlcNAc...) asparagine glycan. Residues Tyr279 and Tyr282 each carry the sulfotyrosine modification. Residue Ser312 is modified to Phosphoserine. The segment at 359–391 is disordered; the sequence is LTPSPSAKKQKSRRRSRKRYRSRYGRGRSQNSR. A compositionally biased stretch (basic residues) spans 366 to 384; it reads KKQKSRRRSRKRYRSRYGR. The tract at residues 366–392 is glycosaminoglycan binding region; that stretch reads KKQKSRRRSRKRYRSRYGRGRSQNSRR. Ser394 is subject to Phosphoserine. The Hemopexin 4 repeat unit spans residues 419–469; it reads TSWLKPATSEPIQSVYFFSGDKYYRVNLRTQRVDTVNPPYPRSIAQYWLGC.

In terms of assembly, interacts with SERPINE1/PAI1 and C1QBP. Monomer. Post-translationally, sulfated on tyrosine residues. N- and O-glycosylated. In terms of processing, it has been suggested that the active SMB domain may be permitted considerable disulfide bond heterogeneity or variability, thus two alternate disulfide patterns based on 3D structures are described with 1 disulfide bond conserved in both. In terms of tissue distribution, plasma.

The protein localises to the secreted. Its subcellular location is the extracellular space. Functionally, vitronectin is a cell adhesion and spreading factor found in serum and tissues. Vitronectin interact with glycosaminoglycans and proteoglycans. Is recognized by certain members of the integrin family and serves as a cell-to-substrate adhesion molecule. Inhibitor of the membrane-damaging effect of the terminal cytolytic complement pathway. The protein is Vitronectin (VTN) of Oryctolagus cuniculus (Rabbit).